Reading from the N-terminus, the 323-residue chain is tRNA U34 carboxymethyltransferase (323 aa).

Carboxy-S-adenosyl-L-methionine is bound by residues lysine 91, tryptophan 105, lysine 110, glycine 130, 152–154 (DPT), 181–182 (IE), methionine 196, tyrosine 200, and arginine 315.

The protein belongs to the class I-like SAM-binding methyltransferase superfamily. CmoB family. In terms of assembly, homotetramer.

It carries out the reaction carboxy-S-adenosyl-L-methionine + 5-hydroxyuridine(34) in tRNA = 5-carboxymethoxyuridine(34) in tRNA + S-adenosyl-L-homocysteine + H(+). In terms of biological role, catalyzes carboxymethyl transfer from carboxy-S-adenosyl-L-methionine (Cx-SAM) to 5-hydroxyuridine (ho5U) to form 5-carboxymethoxyuridine (cmo5U) at position 34 in tRNAs. This chain is tRNA U34 carboxymethyltransferase, found in Salmonella agona (strain SL483).